A 1219-amino-acid chain; its full sequence is Regulator of telomere elongation helicase 1 (1219 aa).

One can recognise a Helicase ATP-binding domain in the interval 7–296; that stretch reads NGVTVDFPFQ…TKAAQQGEPH (290 aa). 42–49 lines the ATP pocket; it reads SPTGTGKT. Residues cysteine 145, cysteine 163, cysteine 172, and cysteine 207 each coordinate [4Fe-4S] cluster. Positions 151–167 match the Nuclear localization signal motif; the sequence is KKQESNHLQIHLCRKKV. Positions 250 to 253 match the DEAH box motif; it reads DEAH. Disordered regions lie at residues 287 to 306, 757 to 786, 839 to 877, 979 to 1005, 1017 to 1054, 1132 to 1151, and 1159 to 1219; these read TKAA…SPSP, PAPA…FFST, EHSE…GRKK, RPEH…PDPK, DPQE…RAGK, CTDL…PQEE, and LTHR…EWGL. The span at 757–766 shows a compositional bias: low complexity; that stretch reads PAPAPRATAP. Positions 863-873 are enriched in basic and acidic residues; the sequence is SEKRPAEEPRG. The Nuclear localization signal motif lies at 871-877; it reads PRGGRKK. Positions 1176 to 1185 are enriched in polar residues; sequence KTQSKISSFL. Positions 1178–1185 match the PIP-box motif; the sequence is QSKISSFL. Residues 1200–1219 show a composition bias toward low complexity; sequence AGPSQSSGPPHGPAASEWGL.

This sequence belongs to the helicase family. RAD3/XPD subfamily. Interacts with TERF1. Interacts (via PIP-box) with PCNA; the interaction is direct and essential for suppressing telomere fragility. Interacts with MMS19; the interaction mediates the association of RTEL1 with the cytosolic iron-sulfur protein assembly (CIA) complex.

It is found in the nucleus. The enzyme catalyses ATP + H2O = ADP + phosphate + H(+). In terms of biological role, a probable ATP-dependent DNA helicase implicated in telomere-length regulation, DNA repair and the maintenance of genomic stability. Acts as an anti-recombinase to counteract toxic recombination and limit crossover during meiosis. Regulates meiotic recombination and crossover homeostasis by physically dissociating strand invasion events and thereby promotes noncrossover repair by meiotic synthesis dependent strand annealing (SDSA) as well as disassembly of D loop recombination intermediates. Also disassembles T loops and prevents telomere fragility by counteracting telomeric G4-DNA structures, which together ensure the dynamics and stability of the telomere. The protein is Regulator of telomere elongation helicase 1 of Homo sapiens (Human).